Consider the following 147-residue polypeptide: Fluoride-specific ion channel FluC 1 (147 aa).

A run of 4 helical transmembrane segments spans residues 29–49 (YVYI…ISFL), 61–81 (IANL…IAFF), 90–110 (AITT…LELI), and 118–138 (FITL…LCYV). 2 residues coordinate Na(+): glycine 97 and threonine 100.

Belongs to the fluoride channel Fluc/FEX (TC 1.A.43) family.

It is found in the cell membrane. It carries out the reaction fluoride(in) = fluoride(out). Its activity is regulated as follows. Na(+) is not transported, but it plays an essential structural role and its presence is essential for fluoride channel function. In terms of biological role, fluoride-specific ion channel. Important for reducing fluoride concentration in the cell, thus reducing its toxicity. The sequence is that of Fluoride-specific ion channel FluC 1 from Staphylococcus aureus (strain Mu50 / ATCC 700699).